The sequence spans 201 residues: Two-component response regulator ORR10 (201 aa).

The region spanning 10–142 (HVLAVDDSLP…DMSKLKPHIL (133 aa)) is the Response regulatory domain. 4-aspartylphosphate is present on Asp-75. The interval 149 to 201 (HYQQEQHLQSNSESNNSSNPTSENSSSSTSTNSHKRKAVDEEILPHTIRPRHS) is disordered. The span at 158-180 (SNSESNNSSNPTSENSSSSTSTN) shows a compositional bias: low complexity.

It belongs to the ARR family. Type-A subfamily. Post-translationally, two-component system major event consists of a His-to-Asp phosphorelay between a sensor histidine kinase (HK) and a response regulator (RR). In plants, the His-to-Asp phosphorelay involves an additional intermediate named Histidine-containing phosphotransfer protein (HPt). This multistep phosphorelay consists of a His-Asp-His-Asp sequential transfer of a phosphate group between first a His and an Asp of the HK protein, followed by the transfer to a conserved His of the HPt protein and finally the transfer to an Asp in the receiver domain of the RR protein. Expressed in mature leaves, and at low levels in roots, shoots and flowers.

In terms of biological role, functions as a response regulator involved in His-to-Asp phosphorelay signal transduction system. Phosphorylation of the Asp residue in the receiver domain activates the ability of the protein to promote the transcription of target genes. Type-A response regulators seem to act as negative regulators of the cytokinin signaling. This chain is Two-component response regulator ORR10, found in Oryza sativa subsp. indica (Rice).